The primary structure comprises 473 residues: Cysteine--tRNA ligase (473 aa).

Residue cysteine 30 participates in Zn(2+) binding. The 'HIGH' region signature appears at 32-42 (MTVYDYCHIGH). Zn(2+)-binding residues include cysteine 213, histidine 238, and glutamate 242. The short motif at 270 to 274 (KMSKS) is the 'KMSKS' region element. Lysine 273 is an ATP binding site.

This sequence belongs to the class-I aminoacyl-tRNA synthetase family. Monomer. It depends on Zn(2+) as a cofactor.

It is found in the cytoplasm. The enzyme catalyses tRNA(Cys) + L-cysteine + ATP = L-cysteinyl-tRNA(Cys) + AMP + diphosphate. The polypeptide is Cysteine--tRNA ligase (Acinetobacter baumannii (strain SDF)).